The following is a 329-amino-acid chain: MTKYKLEYIWLDATRPYQTLRGKTQIKEFDAFPTLEQLPLWGFDGSSTLQAEGRTSDCVLKPVTVYPDPVRTNGALVMCEVMMPDAETPHASNTRATVLDDEGAWFGFEQEYFFYKNGRPLGFPEQGYPAPQGPYYTGVGYKNVGDVARQIVEEHLDICLAAGINHEGINAEVAKGQWEFQIFGKGSKKAADEVCVARYLLVRLTEKYGIDVEFHCKPLGDTDWNGSGMHANFSTAYLREVGGQDYFEALMAAFEKNLHDHINVYGPDNHLRLTGKHETAPWDKFSYGVADRGASIRVPHSFVNNAYPGYLEDRRANSQGDPYQMLLSS.

Residues 4–86 form the GS beta-grasp domain; sequence YKLEYIWLDA…VMCEVMMPDA (83 aa). A GS catalytic domain is found at 89 to 329; the sequence is PHASNTRATV…GDPYQMLLSS (241 aa). Glu-109 and Glu-111 together coordinate Mg(2+). Glu-167 contacts ATP. Mg(2+)-binding residues include Glu-172 and Glu-179. Glu-278 is a binding site for L-glutamate.

The protein belongs to the glutamine synthetase family. As to quaternary structure, homooctamer and homotetramer. It depends on Mg(2+) as a cofactor.

The protein localises to the cytoplasm. It carries out the reaction L-glutamate + NH4(+) + ATP = L-glutamine + ADP + phosphate + H(+). Its function is as follows. Catalyzes the ATP-dependent biosynthesis of glutamine from glutamate and ammonia. The sequence is that of Glutamine synthetase from Rhizobium meliloti (Ensifer meliloti).